Consider the following 222-residue polypeptide: Putative thymidylate synthase (222 aa).

Cys146 is an active-site residue.

This sequence belongs to the thymidylate synthase family. Archaeal-type ThyA subfamily. Monomer.

It localises to the cytoplasm. It functions in the pathway pyrimidine metabolism; dTTP biosynthesis. In terms of biological role, may catalyze the biosynthesis of dTMP using an unknown cosubstrate. This is Putative thymidylate synthase from Methanothermobacter thermautotrophicus (strain ATCC 29096 / DSM 1053 / JCM 10044 / NBRC 100330 / Delta H) (Methanobacterium thermoautotrophicum).